The chain runs to 366 residues: Dual-specificity RNA methyltransferase RlmN (366 aa).

E102 serves as the catalytic Proton acceptor. Residues D108 to D340 enclose the Radical SAM core domain. Cysteines 115 and 345 form a disulfide. Residues C122, C126, and C129 each coordinate [4Fe-4S] cluster. S-adenosyl-L-methionine contacts are provided by residues G171–E172, S203, S225–H227, and N302. Residue C345 is the S-methylcysteine intermediate of the active site.

This sequence belongs to the radical SAM superfamily. RlmN family. It depends on [4Fe-4S] cluster as a cofactor.

It localises to the cytoplasm. It carries out the reaction adenosine(2503) in 23S rRNA + 2 reduced [2Fe-2S]-[ferredoxin] + 2 S-adenosyl-L-methionine = 2-methyladenosine(2503) in 23S rRNA + 5'-deoxyadenosine + L-methionine + 2 oxidized [2Fe-2S]-[ferredoxin] + S-adenosyl-L-homocysteine. The catalysed reaction is adenosine(37) in tRNA + 2 reduced [2Fe-2S]-[ferredoxin] + 2 S-adenosyl-L-methionine = 2-methyladenosine(37) in tRNA + 5'-deoxyadenosine + L-methionine + 2 oxidized [2Fe-2S]-[ferredoxin] + S-adenosyl-L-homocysteine. In terms of biological role, specifically methylates position 2 of adenine 2503 in 23S rRNA and position 2 of adenine 37 in tRNAs. m2A2503 modification seems to play a crucial role in the proofreading step occurring at the peptidyl transferase center and thus would serve to optimize ribosomal fidelity. This chain is Dual-specificity RNA methyltransferase RlmN, found in Methylococcus capsulatus (strain ATCC 33009 / NCIMB 11132 / Bath).